A 256-amino-acid chain; its full sequence is Fibroblast growth factor 3 (256 aa).

The first 18 residues, 1-18, serve as a signal peptide directing secretion; sequence MVIILLLLLLSFLDPSLE. Disordered regions lie at residues 31-54, 151-176, and 219-256; these read APCARGQACDPRQRRDAGGRGGVY, RHHATTQPPPTGSGIGGSKRRASSKR, and LRESQRHHTGSHRAPVGRAERRRRRHRGSKGHNRRADI. Residues 238 to 256 are compositionally biased toward basic residues; that stretch reads ERRRRRHRGSKGHNRRADI.

This sequence belongs to the heparin-binding growth factors family.

The protein resides in the secreted. In terms of biological role, plays an important role in the regulation of embryonic development, cell proliferation, and cell differentiation. The chain is Fibroblast growth factor 3 (fgf3) from Danio rerio (Zebrafish).